Here is a 295-residue protein sequence, read N- to C-terminus: Carbapenem-hydrolyzing beta-lactamase transcriptional activator (295 aa).

The HTH lysR-type domain occupies 5 to 62; it reads LPLNALRAFEASARYLNFTKAGLELHVSQAAVSQQVRTLEQMLGVALFTRVPRGLQLT. Residues 22-41 constitute a DNA-binding region (H-T-H motif); sequence FTKAGLELHVSQAAVSQQVR.

Belongs to the LysR transcriptional regulatory family.

Functionally, this protein is a positive regulator of gene expression of carbapenem-hydrolyzing beta-lactamase (NmcA). This Enterobacter cloacae protein is Carbapenem-hydrolyzing beta-lactamase transcriptional activator (nmcR).